A 733-amino-acid polypeptide reads, in one-letter code: Forkhead box protein K1 (733 aa).

Residue Ala2 is modified to N-acetylalanine. Residues Ala2–Pro40 are interaction with SIN3A and SIN3B. The segment at Ala36–Gly79 is disordered. A compositionally biased stretch (pro residues) spans Ala37–Pro62. The interval Ala95 to Ser420 is required for interaction with FOXO4 and MEF2C. Ser101 is modified (phosphoserine). Residues Val123–Gln175 enclose the FHA domain. Omega-N-methylarginine occurs at positions 161 and 191. Phosphoserine is present on residues Ser213, Ser223, Ser239, and Ser243. Thr245 and Thr247 each carry phosphothreonine. Phosphoserine occurs at positions 253, 257, 295, and 299. Disordered stretches follow at residues Ala287 to Pro306 and Ser413 to Thr436. The segment at residues Lys305–Arg400 is a DNA-binding region (fork-head). Residues Ser416 and Ser420 each carry the phosphoserine modification. Thr422 is subject to Phosphothreonine. Ser428 bears the Phosphoserine mark. A Phosphothreonine modification is found at Thr436. A phosphoserine mark is found at Ser441, Ser445, and Ser459. Over residues Val676–Thr697 the composition is skewed to low complexity. Positions Val676 to Glu733 are disordered. Residues Pro700–Glu709 show a composition bias toward basic and acidic residues.

In terms of assembly, interacts with SIN3A and SIN3B (via PAH2) to form a complex which represses transcription. Component of SIN3A-, but not SIN3B-, containing multiprotein complexes. Interacts with FOXO4 and MEF2C; both interactions inhibit FOXO4 and MEF2C transactivation activity. Interacts (when phosphorylated) with YWHAE/14-3-3-epsilon; promotes sequestration in the cytoplasm and leads to impaired ability to bind DNA. Interacts with FHL2. Interacts with SRF. Interacts with DVL2 and DVL3; the interaction induces DVL2 nuclear translocation. Interacts with BAP1 (when phosphorylated). Accessory component of the polycomb repressive deubiquitinase (PR-DUB) complex, at least composed of BAP1, one of ASXL1, ASXL2 or (probably) ASXL3 and one of MBD5 or MBD6. The PR-DUB core associates with a number of accessory proteins, including FOXK1, FOXK2, KDM1B, HCFC1 and OGT. Post-translationally, phosphorylation by GSK3 (GSK3A or GSK3B) promotes interaction with YWHAE/14-3-3-epsilon and retention in the cytoplasm. In response to mTORC1 signaling, phosphorylation by GSK3 is prevented, leading to translocation to the nucleus. Expressed both developing and adult tissues. In adults, significant expression is seen in tumors of the brain, colon and lymph node.

It is found in the nucleus. The protein resides in the cytoplasm. Its function is as follows. Transcriptional regulator involved in different processes such as glucose metabolism, aerobic glycolysis, muscle cell differentiation and autophagy. Recognizes and binds the forkhead DNA sequence motif (5'-GTAAACA-3') and can both act as a transcription activator or repressor, depending on the context. Together with FOXK2, acts as a key regulator of metabolic reprogramming towards aerobic glycolysis, a process in which glucose is converted to lactate in the presence of oxygen. Acts by promoting expression of enzymes for glycolysis (such as hexokinase-2 (HK2), phosphofructokinase, pyruvate kinase (PKLR) and lactate dehydrogenase), while suppressing further oxidation of pyruvate in the mitochondria by up-regulating pyruvate dehydrogenase kinases PDK1 and PDK4. Probably plays a role in gluconeogenesis during overnight fasting, when lactate from white adipose tissue and muscle is the main substrate. Involved in mTORC1-mediated metabolic reprogramming: in response to mTORC1 signaling, translocates into the nucleus and regulates the expression of genes associated with glycolysis and downstream anabolic pathways, such as HIF1A, thereby regulating glucose metabolism. Together with FOXK2, acts as a negative regulator of autophagy in skeletal muscle: in response to starvation, enters the nucleus, binds the promoters of autophagy genes and represses their expression, preventing proteolysis of skeletal muscle proteins. Acts as a transcriptional regulator of the myogenic progenitor cell population in skeletal muscle. Binds to the upstream enhancer region (CCAC box) of myoglobin (MB) gene, regulating the myogenic progenitor cell population. Promotes muscle progenitor cell proliferation by repressing the transcriptional activity of FOXO4, thereby inhibiting myogenic differentiation. Involved in remodeling processes of adult muscles that occur in response to physiological stimuli. Required to correct temporal orchestration of molecular and cellular events necessary for muscle repair. Represses myogenic differentiation by inhibiting MEFC activity. Positively regulates Wnt/beta-catenin signaling by translocating DVL into the nucleus. Reduces virus replication, probably by binding the interferon stimulated response element (ISRE) to promote antiviral gene expression. Accessory component of the polycomb repressive deubiquitinase (PR-DUB) complex; recruits the PR-DUB complex to specific FOXK1-bound genes. The chain is Forkhead box protein K1 from Homo sapiens (Human).